Here is a 611-residue protein sequence, read N- to C-terminus: Protein halfway (611 aa).

The signal sequence occupies residues 1–22 (MLAYTHGTWLLLLLLLVAGACA). Disordered regions lie at residues 31-64 (DPAA…LKED), 90-132 (SLAE…AAPE), and 154-185 (GRAE…CQCR). Over residues 43 to 59 (AHAHPQARHHHHAHPHA) the composition is skewed to basic residues. The span at 90 to 101 (SLAETQSMSDPG) shows a compositional bias: polar residues. Over residues 102–123 (SVTDTTSTSTSHSTSTTSTTSP) the composition is skewed to low complexity. A compositionally biased stretch (polar residues) spans 159-183 (SEGQGSTVAQSEAQNRGGQGNSQCQ). 4 N-linked (GlcNAc...) asparagine glycosylation sites follow: N221, N246, N264, and N269. 4 LRR repeats span residues 236-257 (SLQS…FPRL), 259-280 (ALKC…AVKD), 283-304 (HLEF…NQNK), and 313-334 (NMRM…NFLN). Residues 361–416 (ENRKRCVTNCPVIPNYGSCNCTLENIMIIQDNQSKPQCHVDCSNLGLVELPQRLPD) form the LRRNT domain. 3 LRR repeats span residues 417–438 (NTFM…FHTN), 443–464 (NINR…EGTK), and 468–489 (TFQR…FLNN). The LRRCT domain maps to 505-554 (NKLQCDCNSAKTLQNWLKERSSDIPDYMEIRCRNMPQRVIELQEAKLCQS).

Has a role in the ecdysone induced cascade; probably indirect control of 'late' ecdysone genes. The sequence is that of Protein halfway from Drosophila melanogaster (Fruit fly).